The following is a 287-amino-acid chain: Bifunctional protein FolD (287 aa).

NADP(+) is bound by residues 164–166, Ser189, and Ile230; that span reads GSS.

It belongs to the tetrahydrofolate dehydrogenase/cyclohydrolase family. In terms of assembly, homodimer.

The catalysed reaction is (6R)-5,10-methylene-5,6,7,8-tetrahydrofolate + NADP(+) = (6R)-5,10-methenyltetrahydrofolate + NADPH. It carries out the reaction (6R)-5,10-methenyltetrahydrofolate + H2O = (6R)-10-formyltetrahydrofolate + H(+). It functions in the pathway one-carbon metabolism; tetrahydrofolate interconversion. In terms of biological role, catalyzes the oxidation of 5,10-methylenetetrahydrofolate to 5,10-methenyltetrahydrofolate and then the hydrolysis of 5,10-methenyltetrahydrofolate to 10-formyltetrahydrofolate. The chain is Bifunctional protein FolD from Aliarcobacter butzleri (strain RM4018) (Arcobacter butzleri).